The following is a 155-amino-acid chain: Protein Smg homolog (155 aa).

Belongs to the Smg family.

The sequence is that of Protein Smg homolog from Methylococcus capsulatus (strain ATCC 33009 / NCIMB 11132 / Bath).